The chain runs to 794 residues: Lon protease (794 aa).

A Lon N-terminal domain is found at 29-222 (VPLLPLRGVL…TLISIIQDEQ (194 aa)). 374–381 (GPPGVGKT) contributes to the ATP binding site. The 182-residue stretch at 610–791 (TDQVGMATGL…DEVLEHALVG (182 aa)) folds into the Lon proteolytic domain. Residues Ser697 and Lys740 contribute to the active site.

It belongs to the peptidase S16 family. In terms of assembly, homohexamer. Organized in a ring with a central cavity.

It localises to the cytoplasm. The catalysed reaction is Hydrolysis of proteins in presence of ATP.. Functionally, ATP-dependent serine protease that mediates the selective degradation of mutant and abnormal proteins as well as certain short-lived regulatory proteins. Required for cellular homeostasis and for survival from DNA damage and developmental changes induced by stress. Degrades polypeptides processively to yield small peptide fragments that are 5 to 10 amino acids long. Binds to DNA in a double-stranded, site-specific manner. In Bacillus thuringiensis (strain Al Hakam), this protein is Lon protease.